Here is a 719-residue protein sequence, read N- to C-terminus: Histone-lysine N-methyltransferase SETDB2 (719 aa).

Positions 72–82 are enriched in polar residues; sequence SQKEVNAQSSD. The segment at 72–102 is disordered; it reads SQKEVNAQSSDPMPVTQKEQENKSNAFPSTS. In terms of domain architecture, MBD spans 157–229; sequence LNLKGENPLQ…DNFSFNTYVQ (73 aa). In terms of domain architecture, Pre-SET spans 291 to 364; that stretch reads DSCDCSEGCI…LCQNRVVQHG (74 aa). Zn(2+) is bound by residues Cys-293, Cys-295, Cys-299, Cys-305, Cys-307, Cys-345, Cys-349, Cys-351, and Cys-356. The SET domain occupies 367 to 694; it reads VRLQVFKTEQ…ARTELTWDYG (328 aa). S-adenosyl-L-methionine-binding positions include 377 to 379 and Asp-418; that span reads KGW. The interval 508 to 547 is disordered; it reads FVSSESVTPEDNDGFKPPREHLNSKTKGAQKDSSSNHVDE. The span at 520–530 shows a compositional bias: basic and acidic residues; the sequence is DGFKPPREHLN. Residues 532–543 are compositionally biased toward polar residues; sequence KTKGAQKDSSSN. S-adenosyl-L-methionine is bound by residues Arg-648 and 651–652; that span reads NH. Residues Cys-654, Cys-707, Cys-709, and Cys-714 each contribute to the Zn(2+) site.

The protein belongs to the class V-like SAM-binding methyltransferase superfamily. In terms of tissue distribution, ubiquitous. Highest expression in heart, testis and ovary.

Its subcellular location is the nucleus. It localises to the chromosome. The catalysed reaction is N(6),N(6)-dimethyl-L-lysyl(9)-[histone H3] + S-adenosyl-L-methionine = N(6),N(6),N(6)-trimethyl-L-lysyl(9)-[histone H3] + S-adenosyl-L-homocysteine + H(+). Its function is as follows. Histone methyltransferase involved in left-right axis specification in early development and mitosis. Specifically trimethylates 'Lys-9' of histone H3 (H3K9me3). H3K9me3 is a specific tag for epigenetic transcriptional repression that recruits HP1 (CBX1, CBX3 and/or CBX5) proteins to methylated histones. Contributes to H3K9me3 in both the interspersed repetitive elements and centromere-associated repeats. Plays a role in chromosome condensation and segregation during mitosis. The chain is Histone-lysine N-methyltransferase SETDB2 (SETDB2) from Homo sapiens (Human).